The primary structure comprises 102 residues: Large ribosomal subunit protein uL24c (102 aa).

The protein belongs to the universal ribosomal protein uL24 family. As to quaternary structure, part of the 50S ribosomal subunit.

The protein resides in the plastid. It is found in the chloroplast. Its function is as follows. One of two assembly initiator proteins, it binds directly to the 5'-end of the 23S rRNA, where it nucleates assembly of the 50S subunit. The sequence is that of Large ribosomal subunit protein uL24c (rpl24) from Rhodomonas salina (Cryptomonas salina).